A 161-amino-acid polypeptide reads, in one-letter code: MRCPSCNSLDTQVKDSRPTEDSSVIRRRRVCVTCNFRFTTFERVQLRELTVIKRNGRRVPFDRDKLMRSVQISLRKRSVDPERVEKMVSAIVRELESGGESEVSSEAIGEIVMEHLRDLDDVAYVRFASVYRNFREAKDFEAVLGELSAEDEAPRLAPVRK.

Residues 1-11 are compositionally biased toward polar residues; the sequence is MRCPSCNSLDT. The interval 1-20 is disordered; the sequence is MRCPSCNSLDTQVKDSRPTE. A zinc finger spans residues 3 to 34; sequence CPSCNSLDTQVKDSRPTEDSSVIRRRRVCVTC. The ATP-cone domain maps to 49–139; it reads LTVIKRNGRR…VYRNFREAKD (91 aa).

The protein belongs to the NrdR family. Zn(2+) is required as a cofactor.

Negatively regulates transcription of bacterial ribonucleotide reductase nrd genes and operons by binding to NrdR-boxes. The chain is Transcriptional repressor NrdR from Bradyrhizobium sp. (strain BTAi1 / ATCC BAA-1182).